The primary structure comprises 477 residues: Aspartyl/glutamyl-tRNA(Asn/Gln) amidotransferase subunit B (477 aa).

This sequence belongs to the GatB/GatE family. GatB subfamily. As to quaternary structure, heterotrimer of A, B and C subunits.

The enzyme catalyses L-glutamyl-tRNA(Gln) + L-glutamine + ATP + H2O = L-glutaminyl-tRNA(Gln) + L-glutamate + ADP + phosphate + H(+). It carries out the reaction L-aspartyl-tRNA(Asn) + L-glutamine + ATP + H2O = L-asparaginyl-tRNA(Asn) + L-glutamate + ADP + phosphate + 2 H(+). Functionally, allows the formation of correctly charged Asn-tRNA(Asn) or Gln-tRNA(Gln) through the transamidation of misacylated Asp-tRNA(Asn) or Glu-tRNA(Gln) in organisms which lack either or both of asparaginyl-tRNA or glutaminyl-tRNA synthetases. The reaction takes place in the presence of glutamine and ATP through an activated phospho-Asp-tRNA(Asn) or phospho-Glu-tRNA(Gln). The polypeptide is Aspartyl/glutamyl-tRNA(Asn/Gln) amidotransferase subunit B (Streptococcus gordonii (strain Challis / ATCC 35105 / BCRC 15272 / CH1 / DL1 / V288)).